The primary structure comprises 386 residues: Methionine import ATP-binding protein MetN 2 (386 aa).

The ABC transporter domain occupies 32–272; that stretch reads VIFDDVGKVF…PQHDATRALL (241 aa). ATP is bound at residue 69–76; sequence GRSGAGKS.

Belongs to the ABC transporter superfamily. Methionine importer (TC 3.A.1.24) family. The complex is composed of two ATP-binding proteins (MetN), two transmembrane proteins (MetI) and a solute-binding protein (MetQ).

Its subcellular location is the cell inner membrane. The enzyme catalyses L-methionine(out) + ATP + H2O = L-methionine(in) + ADP + phosphate + H(+). The catalysed reaction is D-methionine(out) + ATP + H2O = D-methionine(in) + ADP + phosphate + H(+). Its function is as follows. Part of the ABC transporter complex MetNIQ involved in methionine import. Responsible for energy coupling to the transport system. The polypeptide is Methionine import ATP-binding protein MetN 2 (Paraburkholderia xenovorans (strain LB400)).